A 401-amino-acid chain; its full sequence is Lipid-A-disaccharide synthase (401 aa).

The protein belongs to the LpxB family.

The enzyme catalyses a lipid X + a UDP-2-N,3-O-bis[(3R)-3-hydroxyacyl]-alpha-D-glucosamine = a lipid A disaccharide + UDP + H(+). Its pathway is bacterial outer membrane biogenesis; LPS lipid A biosynthesis. In terms of biological role, condensation of UDP-2,3-diacylglucosamine and 2,3-diacylglucosamine-1-phosphate to form lipid A disaccharide, a precursor of lipid A, a phosphorylated glycolipid that anchors the lipopolysaccharide to the outer membrane of the cell. The sequence is that of Lipid-A-disaccharide synthase from Rhodospirillum centenum (strain ATCC 51521 / SW).